A 904-amino-acid chain; its full sequence is Eukaryotic translation initiation factor 3 subunit C (904 aa).

2 disordered regions span residues 1-38 (MSRF…EEED) and 156-290 (FRES…TSEK). Polar residues predominate over residues 22-32 (IQRQTAPQFTF). Residues 161–183 (DAADDEDEEEEKKEEEESDDEEA) are compositionally biased toward acidic residues. Over residues 194–206 (FKKDTVEKVKVEK) the composition is skewed to basic and acidic residues. Positions 207 to 232 (DDDDSDDSIDWGQDSDSDESSSEEEA) are enriched in acidic residues. Residues 237–247 (IRERFLKRPEK) are compositionally biased toward basic and acidic residues. The segment covering 257–272 (KEKKKTKETKDSRKKK) has biased composition (basic residues). The PCI domain maps to 636-812 (FHMHINLELL…ETVVLHRSEP (177 aa)). Positions 847–904 (RGGNQGYNRDRQNYRNQNQNRENWNNNRRQDRGNRNRNQNRDREQREQHRVEFEEKAE) are disordered. Residues 860–873 (YRNQNQNRENWNNN) show a composition bias toward low complexity. The segment covering 874–904 (RRQDRGNRNRNQNRDREQREQHRVEFEEKAE) has biased composition (basic and acidic residues).

It belongs to the eIF-3 subunit C family. In terms of assembly, component of the eukaryotic translation initiation factor 3 (eIF-3) complex.

Its subcellular location is the cytoplasm. Its function is as follows. Component of the eukaryotic translation initiation factor 3 (eIF-3) complex, which is involved in protein synthesis of a specialized repertoire of mRNAs and, together with other initiation factors, stimulates binding of mRNA and methionyl-tRNAi to the 40S ribosome. The eIF-3 complex specifically targets and initiates translation of a subset of mRNAs involved in cell proliferation. The protein is Eukaryotic translation initiation factor 3 subunit C of Culex quinquefasciatus (Southern house mosquito).